The sequence spans 69 residues: Putative membrane protein insertion efficiency factor (69 aa).

The protein belongs to the UPF0161 family.

Its subcellular location is the cell membrane. Its function is as follows. Could be involved in insertion of integral membrane proteins into the membrane. The polypeptide is Putative membrane protein insertion efficiency factor (Clostridium botulinum (strain Okra / Type B1)).